The sequence spans 130 residues: Protein ApaG (130 aa).

An ApaG domain is found at 3–127 (SAVTRGIEVT…FSLDVPEQRR (125 aa)).

The protein is Protein ApaG of Brucella abortus (strain S19).